A 563-amino-acid polypeptide reads, in one-letter code: Arginine--tRNA ligase (563 aa).

The short motif at 122-132 (PNIAKPMSMGH) is the 'HIGH' region element.

Belongs to the class-I aminoacyl-tRNA synthetase family. Monomer.

The protein resides in the cytoplasm. It carries out the reaction tRNA(Arg) + L-arginine + ATP = L-arginyl-tRNA(Arg) + AMP + diphosphate. The sequence is that of Arginine--tRNA ligase from Ligilactobacillus salivarius (strain UCC118) (Lactobacillus salivarius).